Here is a 162-residue protein sequence, read N- to C-terminus: Phospholipase A2 (162 aa).

Positions 1–22 (MKVLQMFFCVILLCVTSVLVEA) are cleaved as a signal peptide. Residues 23 to 35 (KSTTKGDETASKR) constitute a propeptide that is removed on maturation. Intrachain disulfides connect Cys60–Cys155, Cys62–Cys78, Cys77–Cys134, Cys84–Cys127, Cys94–Cys120, and Cys113–Cys125. Residues Tyr61, Gly63, and Gly65 each contribute to the Ca(2+) site. Residue His81 is part of the active site. Asp82 is a Ca(2+) binding site. Residue Asp128 is part of the active site.

This sequence belongs to the phospholipase A2 family. Group I subfamily. D49 sub-subfamily. Ca(2+) serves as cofactor. In terms of tissue distribution, expressed both outside and in acontia, a specialised envenomation structure laden with batteries of venom-containing nematocysts found only in the superfamily Metridioidea.

The protein localises to the secreted. The protein resides in the nematocyst. It carries out the reaction a 1,2-diacyl-sn-glycero-3-phosphocholine + H2O = a 1-acyl-sn-glycero-3-phosphocholine + a fatty acid + H(+). In terms of biological role, PLA2 catalyzes the calcium-dependent hydrolysis of the 2-acyl groups in 3-sn-phosphoglycerides. The sequence is that of Phospholipase A2 from Calliactis polypus (Hermit crab anemone).